Here is a 2062-residue protein sequence, read N- to C-terminus: Ankyrin repeat domain-containing protein 12 (2062 aa).

Disordered regions lie at residues 1 to 119 and 145 to 188; these read MPKS…GNKK and ARDN…GETP. Residues 9–20 show a composition bias toward polar residues; it reads PIQSENSDSDSN. Basic and acidic residues-rich tracts occupy residues 41 to 57 and 100 to 117; these read PKIE…EKSS and YSEK…EAGN. Positions 145–172 are enriched in polar residues; that stretch reads ARDNSPDSTPNHPSQTTPAQKKTPSSSS. At Ser149 the chain carries Phosphoserine. Positions 173–187 are enriched in basic and acidic residues; sequence RQKDKVNKRNERGET. ANK repeat units lie at residues 184-213, 217-246, and 250-280; these read RGET…NVNV, AGWT…DVNT, and DDDT…PFQA. Disordered stretches follow at residues 301–338, 409–501, 538–577, 609–683, 727–788, 812–1073, 1097–1227, and 1328–1350; these read KREV…TEKD, KSFK…TRIT, ISTG…MSLQ, QKDF…DSAK, EKNI…FTSL, EKHI…LVND, KHKE…RPPV, and EESN…KPEV. Over residues 306–318 the composition is skewed to acidic residues; that stretch reads LSDDDESYTDSEE. Polar residues-rich tracts occupy residues 319-328 and 437-454; these read AQSVNPSSVD and KKIS…NSDM. The segment covering 455–467 has biased composition (basic and acidic residues); sequence QTKKEYVVSGEHK. Over residues 468–480 the composition is skewed to basic residues; the sequence is QKGKVKRKLKNQN. Positions 481–498 are enriched in basic and acidic residues; it reads KNKENQELKQEKEGKENT. Ser543 bears the Phosphoserine mark. Positions 565–575 are enriched in polar residues; that stretch reads TCLSPGSSEMS. Basic and acidic residues-rich tracts occupy residues 609 to 631, 639 to 649, 658 to 683, 727 to 784, 812 to 969, 977 to 1037, 1061 to 1072, and 1103 to 1157; these read QKDF…DHSP, TLKKMDKEGKT, KERE…DSAK, EKNI…KDSE, EKHI…DKES, HIQE…KDKI, KDTRPKEKRLVN, and KQKE…KQPK. Ser630 is modified (phosphoserine). Phosphoserine is present on Ser861. The span at 1161–1189 shows a compositional bias: polar residues; it reads SNRSQSVDTKNVMTLGKSSFVSDNSLNRS. Low complexity predominate over residues 1200-1213; that stretch reads SSRSVSMISVASSE. Over residues 1328-1344 the composition is skewed to polar residues; the sequence is EESNQGSLLTVPGDTSP. Ser1401 carries the phosphoserine modification. 2 disordered regions span residues 1721 to 1744 and 1756 to 1795; these read NAED…NTMA and LLSE…VPQP. A compositionally biased stretch (polar residues) spans 1729–1744; the sequence is NQIPQRMTRNKANTMA.

Interacts with the PAS region of the p160 coactivators.

The protein localises to the nucleus. Functionally, may recruit HDACs to the p160 coactivators/nuclear receptor complex to inhibit ligand-dependent transactivation. In Homo sapiens (Human), this protein is Ankyrin repeat domain-containing protein 12 (ANKRD12).